Here is a 630-residue protein sequence, read N- to C-terminus: Plastin-3 (630 aa).

EF-hand domains follow at residues aspartate 12–proline 47 and lysine 52–serine 87. Ca(2+) contacts are provided by aspartate 25, asparagine 27, asparagine 29, glutamate 36, aspartate 65, asparagine 67, aspartate 69, lysine 71, and glutamate 76. Actin-binding stretches follow at residues threonine 109–lysine 382 and proline 383–methionine 627. Calponin-homology (CH) domains are found at residues glutamate 123–leucine 239 and leucine 267–proline 378. Phosphoserine is present on residues serine 268, serine 293, serine 326, and serine 339. Phosphothreonine is present on threonine 391. Calponin-homology (CH) domains lie at threonine 397–threonine 506 and lysine 518–methionine 627.

Monomer. As to expression, expressed in a variety of organs, including muscle, brain, uterus and esophagus.

Its subcellular location is the cytoplasm. In terms of biological role, actin-bundling protein. The chain is Plastin-3 (PLS3) from Homo sapiens (Human).